A 427-amino-acid chain; its full sequence is Nuclear distribution protein PAC1-2 (427 aa).

The 33-residue stretch at 8–40 (QKDDLNKSIAEYLYAQDLTEIADSLCARLSLDY) folds into the LisH domain. Residues 58–82 (SVIRLQKKLIESENRYTALQEDIAA) are a coiled coil. WD repeat units lie at residues 106-147 (SHRA…RTLK), 149-187 (HTREVWGVDFDSKGSFLATCSSDLSIKVWDTQQWDNAGY), 194-233 (GHEHTVSTVKFLPGDDLIASASRDKTIRIWEVATTFCIRT), 236-275 (GHEDWVRMTVPSTDGTLLGSCSSDNTARVWDPTSGVMKME), 278-336 (GHGH…ELRT), 339-378 (GHNDWIRGLVFHPSGKHLLSASDDKTIRVWELSTGRCMXV), and 381-420 (AHSHFITCLAWGPPVSAVARVELPRTPFCGDPKPIASRIM).

The protein belongs to the WD repeat LIS1/nudF family. In terms of assembly, self-associates. Interacts with NDL1 and dynein.

Its subcellular location is the cytoplasm. It localises to the cytoskeleton. The protein localises to the spindle pole. Functionally, positively regulates the activity of the minus-end directed microtubule motor protein dynein. May enhance dynein-mediated microtubule sliding by targeting dynein to the microtubule plus end. Required for nuclear migration during vegetative growth as well as development. Required for retrograde early endosome (EE) transport from the hyphal tip. Required for localization of dynein to the mitotic spindle poles. Recruits additional proteins to the dynein complex at SPBs. This chain is Nuclear distribution protein PAC1-2, found in Postia placenta (strain ATCC 44394 / Madison 698-R) (Brown rot fungus).